The following is a 62-amino-acid chain: MKAKEIREMGADEIRRKIDDSTQEMFNLRFQHATGQLENTARLNKTKKEVARLKTILKEVEQ.

It belongs to the universal ribosomal protein uL29 family.

This chain is Large ribosomal subunit protein uL29, found in Desulfatibacillum aliphaticivorans.